A 456-amino-acid chain; its full sequence is UDP-N-acetylmuramate--L-alanine ligase (456 aa).

112–118 contributes to the ATP binding site; it reads GAHGKTS.

Belongs to the MurCDEF family.

Its subcellular location is the cytoplasm. It catalyses the reaction UDP-N-acetyl-alpha-D-muramate + L-alanine + ATP = UDP-N-acetyl-alpha-D-muramoyl-L-alanine + ADP + phosphate + H(+). It participates in cell wall biogenesis; peptidoglycan biosynthesis. Cell wall formation. This is UDP-N-acetylmuramate--L-alanine ligase from Desulforapulum autotrophicum (strain ATCC 43914 / DSM 3382 / VKM B-1955 / HRM2) (Desulfobacterium autotrophicum).